The following is a 101-amino-acid chain: Small ribosomal subunit protein uS14 (101 aa).

The segment at 1-25 (MAKVSAIQKNKSRQKKSQRLHNKRS) is disordered. Residues 10–25 (NKSRQKKSQRLHNKRS) are compositionally biased toward basic residues.

It belongs to the universal ribosomal protein uS14 family. Part of the 30S ribosomal subunit. Contacts proteins S3 and S10.

Its function is as follows. Binds 16S rRNA, required for the assembly of 30S particles and may also be responsible for determining the conformation of the 16S rRNA at the A site. This chain is Small ribosomal subunit protein uS14, found in Rickettsia typhi (strain ATCC VR-144 / Wilmington).